The following is a 128-amino-acid chain: Lysozyme C-1 (128 aa).

Residues 1 to 128 (KVYDRCEFAR…VSQYIRGCKL (128 aa)) form the C-type lysozyme domain. 4 disulfide bridges follow: Cys-6–Cys-126, Cys-30–Cys-114, Cys-63–Cys-79, and Cys-75–Cys-93. Catalysis depends on residues Glu-35 and Asp-51.

It belongs to the glycosyl hydrolase 22 family. As to quaternary structure, monomer.

It is found in the secreted. It carries out the reaction Hydrolysis of (1-&gt;4)-beta-linkages between N-acetylmuramic acid and N-acetyl-D-glucosamine residues in a peptidoglycan and between N-acetyl-D-glucosamine residues in chitodextrins.. Its function is as follows. Lysozymes have primarily a bacteriolytic function; those in tissues and body fluids are associated with the monocyte-macrophage system and enhance the activity of immunoagents. This chain is Lysozyme C-1, found in Sus scrofa (Pig).